Here is a 688-residue protein sequence, read N- to C-terminus: G protein-coupled receptor kinase 3 (688 aa).

The tract at residues M1–D190 is N-terminal. Positions T54 to C175 constitute an RGS domain. The Protein kinase domain occupies F191–F453. ATP-binding positions include I197–V205 and K220. Residue D317 is the Proton acceptor of the active site. Positions R454–V521 constitute an AGC-kinase C-terminal domain. The PH domain maps to D558–M652.

It belongs to the protein kinase superfamily. AGC Ser/Thr protein kinase family. GPRK subfamily. As to quaternary structure, interacts with GIT1. Post-translationally, ubiquitinated. In terms of tissue distribution, ubiquitous; brain, spleen &gt; heart, lung &gt; kidney.

It localises to the postsynapse. The protein localises to the presynapse. The catalysed reaction is [beta-adrenergic receptor] + ATP = [beta-adrenergic receptor]-phosphate + ADP + H(+). In terms of biological role, specifically phosphorylates the agonist-occupied form of the beta-adrenergic and closely related receptors. The chain is G protein-coupled receptor kinase 3 from Bos taurus (Bovine).